Reading from the N-terminus, the 241-residue chain is Core protein D3 homolog (241 aa).

Belongs to the chordopoxvirinae D3 family.

The protein resides in the virion. Functionally, late protein which is part of a large complex required for early virion morphogenesis. This complex participates in the formation of virosomes and the incorporation of virosomal contents into nascent immature virions. The polypeptide is Core protein D3 homolog (Oryctolagus cuniculus (Rabbit)).